A 75-amino-acid polypeptide reads, in one-letter code: Putative sulfur carrier protein YrkI (75 aa).

C14 functions as the Cysteine persulfide intermediate in the catalytic mechanism.

Belongs to the sulfur carrier protein TusA family.

This Bacillus subtilis (strain 168) protein is Putative sulfur carrier protein YrkI (yrkI).